The primary structure comprises 173 residues: Co-chaperone protein HscB homolog (173 aa).

The J domain maps to 5 to 77; that stretch reads CHFAQFDLQP…PRRALYLLTL (73 aa).

This sequence belongs to the HscB family. In terms of assembly, interacts with HscA and stimulates its ATPase activity.

In terms of biological role, co-chaperone involved in the maturation of iron-sulfur cluster-containing proteins. Seems to help targeting proteins to be folded toward HscA. The sequence is that of Co-chaperone protein HscB homolog from Pseudomonas paraeruginosa (strain DSM 24068 / PA7) (Pseudomonas aeruginosa (strain PA7)).